We begin with the raw amino-acid sequence, 203 residues long: Somatotropin (203 aa).

The N-terminal stretch at Met-1–Ser-17 is a signal peptide. Residue Gln-18 is modified to Pyrrolidone carboxylic acid. His-35 lines the Zn(2+) pocket. Residues Cys-68 and Cys-176 are joined by a disulfide bond. A Zn(2+)-binding site is contributed by Glu-185. Cys-193 and Cys-201 are disulfide-bonded.

Belongs to the somatotropin/prolactin family.

It is found in the secreted. Growth hormone plays an important role in growth control and is involved in the regulation of several anabolic processes. Implicated as an osmoregulatory substance important for seawater adaptation. The sequence is that of Somatotropin (gh) from Solea senegalensis (Senegalese sole).